We begin with the raw amino-acid sequence, 452 residues long: RNA polymerase II-associated protein rba50 (452 aa).

3 disordered regions span residues 60 to 83, 125 to 202, and 223 to 261; these read LRKN…IDEE, EREL…QTKR, and PIKG…PLEF. Positions 125–135 are enriched in basic and acidic residues; it reads ERELAQRKDRS. A compositionally biased stretch (polar residues) spans 136–154; it reads SQVNTPDLSQRPSDDSFLS. Residues 156 to 165 show a composition bias toward basic and acidic residues; it reads EKLRSSEKLN. Residues 170 to 191 show a composition bias toward low complexity; that stretch reads SVLSSEAVDSSSGSPSPPMALS.

It belongs to the RPAP1 family. In terms of assembly, interacts with RNA polymerase II.

Its subcellular location is the cytoplasm. It is found in the nucleus. In terms of biological role, forms an interface between the RNA polymerase II enzyme and chaperone/scaffolding proteins, suggesting that it is required to connect RNA polymerase II to regulators of protein complex formation. This is RNA polymerase II-associated protein rba50 (rba50) from Schizosaccharomyces pombe (strain 972 / ATCC 24843) (Fission yeast).